Reading from the N-terminus, the 403-residue chain is S-arrestin (403 aa).

Thr-231 carries the post-translational modification Phosphothreonine. A disordered region spans residues 381-403 (RQNLKDTGENTEGKKDEDAGQDE).

Belongs to the arrestin family. In terms of assembly, monomer. Homodimer. Homotetramer. Interacts with RHO (via the phosphorylated C-terminus). Retina and pineal gland.

It localises to the cell projection. It is found in the cilium. Its subcellular location is the photoreceptor outer segment. The protein localises to the membrane. Binds to photoactivated, phosphorylated RHO and terminates RHO signaling via G-proteins by competing with G-proteins for the same binding site on RHO. May play a role in preventing light-dependent degeneration of retinal photoreceptor cells. The protein is S-arrestin (Sag) of Rattus norvegicus (Rat).